The following is a 339-amino-acid chain: NADH-quinone oxidoreductase subunit H (339 aa).

Transmembrane regions (helical) follow at residues 9–29 (IFPL…LILC), 50–70 (PNVV…KLLF), 82–102 (ILFI…WAVI), 115–135 (VGVL…IIAG), 161–181 (MGLV…SGII), 187–207 (MPWW…ISVL), 235–255 (MGFA…SAMT), 275–295 (IPGF…FLWI), and 311–331 (GWKV…SVLV).

This sequence belongs to the complex I subunit 1 family. NDH-1 is composed of 14 different subunits. Subunits NuoA, H, J, K, L, M, N constitute the membrane sector of the complex.

The protein resides in the cell inner membrane. It carries out the reaction a quinone + NADH + 5 H(+)(in) = a quinol + NAD(+) + 4 H(+)(out). Its function is as follows. NDH-1 shuttles electrons from NADH, via FMN and iron-sulfur (Fe-S) centers, to quinones in the respiratory chain. The immediate electron acceptor for the enzyme in this species is believed to be ubiquinone. Couples the redox reaction to proton translocation (for every two electrons transferred, four hydrogen ions are translocated across the cytoplasmic membrane), and thus conserves the redox energy in a proton gradient. This subunit may bind ubiquinone. The chain is NADH-quinone oxidoreductase subunit H from Rickettsia felis (strain ATCC VR-1525 / URRWXCal2) (Rickettsia azadi).